The primary structure comprises 482 residues: Cobyrinate a,c-diamide synthase (482 aa).

Residues 248–441 enclose the GATase cobBQ-type domain; that stretch reads RLAIAQDQAF…LHLHWGSQIS (194 aa). Catalysis depends on Cys331, which acts as the Nucleophile.

The protein belongs to the CobB/CbiA family. The cofactor is Mg(2+).

It carries out the reaction cob(II)yrinate + 2 L-glutamine + 2 ATP + 2 H2O = cob(II)yrinate a,c diamide + 2 L-glutamate + 2 ADP + 2 phosphate + 2 H(+). It participates in cofactor biosynthesis; adenosylcobalamin biosynthesis; cob(II)yrinate a,c-diamide from sirohydrochlorin (anaerobic route): step 10/10. Its function is as follows. Catalyzes the ATP-dependent amidation of the two carboxylate groups at positions a and c of cobyrinate, using either L-glutamine or ammonia as the nitrogen source. The polypeptide is Cobyrinate a,c-diamide synthase (Synechocystis sp. (strain ATCC 27184 / PCC 6803 / Kazusa)).